Here is a 193-residue protein sequence, read N- to C-terminus: Ion-translocating oxidoreductase complex subunit A (193 aa).

The next 6 membrane-spanning stretches (helical) occupy residues 5 to 25 (LLLF…FLGL), 39 to 59 (IGMG…AWMV), 62 to 82 (FILL…LVIA), 102 to 122 (LLGI…VALL), 134 to 154 (AVYG…FAAI), and 171 to 191 (SIAL…TGLV).

This sequence belongs to the NqrDE/RnfAE family. As to quaternary structure, the complex is composed of six subunits: RnfA, RnfB, RnfC, RnfD, RnfE and RnfG.

It is found in the cell inner membrane. Its function is as follows. Part of a membrane-bound complex that couples electron transfer with translocation of ions across the membrane. This is Ion-translocating oxidoreductase complex subunit A from Yersinia pestis bv. Antiqua (strain Nepal516).